The sequence spans 204 residues: Small ribosomal subunit protein uS7 (204 aa).

Met-1 bears the N-acetylmethionine mark. Thr-2 is subject to N-acetylthreonine; in 40S ribosomal protein S5, N-terminally processed. Phosphothreonine is present on Thr-14. Lys-47 bears the N6-acetyllysine; alternate mark. Lys-47 is covalently cross-linked (Glycyl lysine isopeptide (Lys-Gly) (interchain with G-Cter in SUMO2); alternate). Ser-142 is modified (phosphoserine).

This sequence belongs to the universal ribosomal protein uS7 family. Component of the small ribosomal subunit. Part of the small subunit (SSU) processome, composed of more than 70 proteins and the RNA chaperone small nucleolar RNA (snoRNA) U3.

It localises to the cytoplasm. The protein resides in the nucleus. It is found in the nucleolus. Component of the small ribosomal subunit. The ribosome is a large ribonucleoprotein complex responsible for the synthesis of proteins in the cell. Part of the small subunit (SSU) processome, first precursor of the small eukaryotic ribosomal subunit. During the assembly of the SSU processome in the nucleolus, many ribosome biogenesis factors, an RNA chaperone and ribosomal proteins associate with the nascent pre-rRNA and work in concert to generate RNA folding, modifications, rearrangements and cleavage as well as targeted degradation of pre-ribosomal RNA by the RNA exosome. The protein is Small ribosomal subunit protein uS7 (Rps5) of Mus musculus (Mouse).